The chain runs to 174 residues: MSKHKGPVDPESLPYRPCVGLMVLNKAGLVWAGRRIVIPGDEMDGATQLWQMPQGGIDKGEEPLEAAIRELYEETGMKSVSLLEEASDWINYDLPPHLVGQALKGKYRGQTQKWFAYRFEGDESEIAINPPPGGHTAEFDRWEWKPMVKLPELIVPFKRKVYEEVVAAFRHLVA.

Residues 14–167 (PYRPCVGLMV…KRKVYEEVVA (154 aa)) form the Nudix hydrolase domain. The short motif at 55-76 (GGIDKGEEPLEAAIRELYEETG) is the Nudix box element.

This sequence belongs to the Nudix hydrolase family. RppH subfamily. The cofactor is a divalent metal cation.

Accelerates the degradation of transcripts by removing pyrophosphate from the 5'-end of triphosphorylated RNA, leading to a more labile monophosphorylated state that can stimulate subsequent ribonuclease cleavage. This chain is RNA pyrophosphohydrolase, found in Brucella anthropi (strain ATCC 49188 / DSM 6882 / CCUG 24695 / JCM 21032 / LMG 3331 / NBRC 15819 / NCTC 12168 / Alc 37) (Ochrobactrum anthropi).